Here is a 600-residue protein sequence, read N- to C-terminus: Glutamine--fructose-6-phosphate aminotransferase [isomerizing] (600 aa).

Residue Cys2 is the Nucleophile; for GATase activity of the active site. One can recognise a Glutamine amidotransferase type-2 domain in the interval Cys2–Asp217. SIS domains lie at Ile283–Ile422 and Ile452–Pro590. Lys595 serves as the catalytic For Fru-6P isomerization activity.

In terms of assembly, homodimer.

The protein resides in the cytoplasm. It catalyses the reaction D-fructose 6-phosphate + L-glutamine = D-glucosamine 6-phosphate + L-glutamate. Its function is as follows. Catalyzes the first step in hexosamine metabolism, converting fructose-6P into glucosamine-6P using glutamine as a nitrogen source. The protein is Glutamine--fructose-6-phosphate aminotransferase [isomerizing] of Bacillus subtilis (strain 168).